Reading from the N-terminus, the 130-residue chain is Small ribosomal subunit protein eS6 (130 aa).

This sequence belongs to the eukaryotic ribosomal protein eS6 family.

In Methanosphaera stadtmanae (strain ATCC 43021 / DSM 3091 / JCM 11832 / MCB-3), this protein is Small ribosomal subunit protein eS6.